Here is a 184-residue protein sequence, read N- to C-terminus: Ribosome-recycling factor (184 aa).

The protein belongs to the RRF family.

Its subcellular location is the cytoplasm. Responsible for the release of ribosomes from messenger RNA at the termination of protein biosynthesis. May increase the efficiency of translation by recycling ribosomes from one round of translation to another. The sequence is that of Ribosome-recycling factor from Hyphomonas neptunium (strain ATCC 15444).